The primary structure comprises 531 residues: T-complex protein 1 subunit zeta (531 aa).

N-acetylalanine is present on A2. The residue at position 5 (K5) is an N6-acetyllysine. Position 39 (G39) interacts with ADP. G39 provides a ligand contact to ATP. D90 contacts Mg(2+). ADP-binding residues include G91, T92, T93, S94, T158, and K159. 3 residues coordinate ATP: G91, T92, and T93. Position 199 is an N6-acetyllysine (K199). A Phosphoserine modification is found at S205. A Glycyl lysine isopeptide (Lys-Gly) (interchain with G-Cter in SUMO2) cross-link involves residue K251. N6-acetyllysine occurs at positions 287, 365, 377, and 388. A411 is a binding site for ADP. ATP is bound by residues A411, G412, D496, and K501. D496 contributes to the ADP binding site.

It belongs to the TCP-1 chaperonin family. In terms of assembly, component of the chaperonin-containing T-complex (TRiC), a hexadecamer composed of two identical back-to-back stacked rings enclosing a protein folding chamber. Each ring is made up of eight different subunits: TCP1/CCT1, CCT2, CCT3, CCT4, CCT5, CCT6A/CCT6, CCT7, CCT8. Interacts with PACRG.

It is found in the cytoplasm. It catalyses the reaction ATP + H2O = ADP + phosphate + H(+). In terms of biological role, component of the chaperonin-containing T-complex (TRiC), a molecular chaperone complex that assists the folding of actin, tubulin and other proteins upon ATP hydrolysis. The TRiC complex mediates the folding of WRAP53/TCAB1, thereby regulating telomere maintenance. This Bos taurus (Bovine) protein is T-complex protein 1 subunit zeta (CCT6A).